Reading from the N-terminus, the 529-residue chain is Bifunctional purine biosynthesis protein PurH (529 aa).

In terms of domain architecture, MGS-like spans 2 to 149 (TDLSPVRRAL…KNHAFVNVVV (148 aa)).

The protein belongs to the PurH family.

The catalysed reaction is (6R)-10-formyltetrahydrofolate + 5-amino-1-(5-phospho-beta-D-ribosyl)imidazole-4-carboxamide = 5-formamido-1-(5-phospho-D-ribosyl)imidazole-4-carboxamide + (6S)-5,6,7,8-tetrahydrofolate. The enzyme catalyses IMP + H2O = 5-formamido-1-(5-phospho-D-ribosyl)imidazole-4-carboxamide. Its pathway is purine metabolism; IMP biosynthesis via de novo pathway; 5-formamido-1-(5-phospho-D-ribosyl)imidazole-4-carboxamide from 5-amino-1-(5-phospho-D-ribosyl)imidazole-4-carboxamide (10-formyl THF route): step 1/1. It functions in the pathway purine metabolism; IMP biosynthesis via de novo pathway; IMP from 5-formamido-1-(5-phospho-D-ribosyl)imidazole-4-carboxamide: step 1/1. The polypeptide is Bifunctional purine biosynthesis protein PurH (Ruegeria pomeroyi (strain ATCC 700808 / DSM 15171 / DSS-3) (Silicibacter pomeroyi)).